Reading from the N-terminus, the 120-residue chain is Dense granule protein 5 (120 aa).

Positions 1 to 25 (MASVKRVVVAVMIVNVLALIFVGVA) are cleaved as a signal peptide. A disordered region spans residues 27–59 (STRDVGSGGDDSEGARGREQQQVQQHEQNEDRS). Residues 76 to 93 (AVGLAAAVVAVVSLLRLL) traverse the membrane as a helical segment. Over residues 100-109 (AIQEESKESA) the composition is skewed to basic and acidic residues. The segment at 100-120 (AIQEESKESATAEEEEVAEEE) is disordered. A compositionally biased stretch (acidic residues) spans 110–120 (TAEEEEVAEEE).

The protein localises to the secreted. It is found in the parasitophorous vacuole lumen. The protein resides in the parasitophorous vacuole membrane. Its subcellular location is the cytoplasmic vesicle. It localises to the secretory vesicle. In terms of biological role, plays a role in the function of the cyst and parasitophorous vacuole membranes and therefore in host-parasite interactions. The polypeptide is Dense granule protein 5 (GRA5) (Toxoplasma gondii).